Reading from the N-terminus, the 57-residue chain is Potassium channel toxin alpha-KTx 1.5 (57 aa).

An N-terminal signal peptide occupies residues 1–20; the sequence is MKISFLLLALVICSIGWSEA. Q21 carries the pyrrolidone carboxylic acid modification. 3 disulfides stabilise this stretch: C27–C48, C33–C53, and C37–C55.

This sequence belongs to the short scorpion toxin superfamily. Potassium channel inhibitor family. Alpha-KTx 01 subfamily. As to expression, expressed by the venom gland.

The protein resides in the secreted. Its function is as follows. Potent blocker of both large-conductance calcium-activated potassium channels (KCa1.1/KCNMA1) and voltage-gated potassium channels (Kv1.3/KCNA3). Has also been shown to moderately inhibit Kv1.2/KCNA2 and weakly inhibit Kv1.1/KCNA1 channels, as well as 5-hydroxytryptamine 3 receptors (HTR3A). This chain is Potassium channel toxin alpha-KTx 1.5, found in Olivierus martensii (Manchurian scorpion).